The sequence spans 1171 residues: ATP-dependent helicase/deoxyribonuclease subunit B (1171 aa).

In terms of domain architecture, UvrD-like helicase ATP-binding spans 1 to 343 (MSLRFVIGRA…LVAEENYRYR (343 aa)). 8–15 (GRAGSGKS) serves as a coordination point for ATP. In terms of domain architecture, UvrD-like helicase C-terminal spans 281–587 (MEQPRFHSPA…QFANIPPSLD (307 aa)). 4 residues coordinate [4Fe-4S] cluster: Cys-805, Cys-1129, Cys-1132, and Cys-1138.

This sequence belongs to the helicase family. AddB/RexB type 1 subfamily. In terms of assembly, heterodimer of AddA and AddB. The cofactor is Mg(2+). Requires [4Fe-4S] cluster as cofactor.

In terms of biological role, the heterodimer acts as both an ATP-dependent DNA helicase and an ATP-dependent, dual-direction single-stranded exonuclease. Recognizes the chi site generating a DNA molecule suitable for the initiation of homologous recombination. The AddB subunit has 5' -&gt; 3' nuclease activity but not helicase activity. The polypeptide is ATP-dependent helicase/deoxyribonuclease subunit B (Bacillus anthracis).